Reading from the N-terminus, the 449-residue chain is Na(+)/H(+) antiporter NhaA 1 (449 aa).

11 helical membrane-spanning segments follow: residues 32-52 (IEATSGAVLLLATVVALTLSN), 87-107 (GLMTLFFFIVALEIKREVVLG), 114-134 (MVAFSVVAAAGGMLVPMGLYL), 145-165 (GWGVVMPTDTAFVIGCLALLG), 174-194 (VFLLSLAVVDDLAAILVVAVG), 202-222 (TALALGAVGLVIIRGMALLGV), 233-253 (AIIWLAVNASGIHATIVGVIL), 318-338 (WVAFGVMPLFALANAGVSITI), 347-367 (LAVMAGFVLGKPIGVTAFAWL), 382-402 (WGGLVGGALLTGIGFTMALFI), and 417-437 (LGILAASVVSSVAGLTLLCMF).

It belongs to the NhaA Na(+)/H(+) (TC 2.A.33) antiporter family.

The protein resides in the cell inner membrane. It catalyses the reaction Na(+)(in) + 2 H(+)(out) = Na(+)(out) + 2 H(+)(in). Functionally, na(+)/H(+) antiporter that extrudes sodium in exchange for external protons. In Acidiphilium cryptum (strain JF-5), this protein is Na(+)/H(+) antiporter NhaA 1.